The following is a 209-amino-acid chain: NADH-quinone oxidoreductase subunit C (209 aa).

Belongs to the complex I 30 kDa subunit family. In terms of assembly, NDH-1 is composed of 14 different subunits. Subunits NuoB, C, D, E, F, and G constitute the peripheral sector of the complex.

The protein localises to the cell inner membrane. It catalyses the reaction a quinone + NADH + 5 H(+)(in) = a quinol + NAD(+) + 4 H(+)(out). Its function is as follows. NDH-1 shuttles electrons from NADH, via FMN and iron-sulfur (Fe-S) centers, to quinones in the respiratory chain. The immediate electron acceptor for the enzyme in this species is believed to be ubiquinone. Couples the redox reaction to proton translocation (for every two electrons transferred, four hydrogen ions are translocated across the cytoplasmic membrane), and thus conserves the redox energy in a proton gradient. The polypeptide is NADH-quinone oxidoreductase subunit C (Bordetella petrii (strain ATCC BAA-461 / DSM 12804 / CCUG 43448)).